Here is a 112-residue protein sequence, read N- to C-terminus: Putative pterin-4-alpha-carbinolamine dehydratase (112 aa).

It belongs to the pterin-4-alpha-carbinolamine dehydratase family.

It carries out the reaction (4aS,6R)-4a-hydroxy-L-erythro-5,6,7,8-tetrahydrobiopterin = (6R)-L-erythro-6,7-dihydrobiopterin + H2O. The chain is Putative pterin-4-alpha-carbinolamine dehydratase from Dechloromonas aromatica (strain RCB).